Reading from the N-terminus, the 527-residue chain is ARS-binding protein 2 (527 aa).

3 disordered regions span residues Pro160 to Ser184, Ser219 to Asn265, and Ile282 to Leu344. Low complexity predominate over residues Ser164–Ser177. The segment covering Arg225–Ser239 has biased composition (polar residues). Basic and acidic residues predominate over residues Pro284 to Asp303. A phosphoserine mark is found at Ser297, Ser298, and Ser302. A compositionally biased stretch (basic residues) spans Pro328 to Arg343.

Its subcellular location is the nucleus. In terms of biological role, binds, preferentially, to the Maundrell ARS consensus sequence within ARS3002. In Schizosaccharomyces pombe (strain 972 / ATCC 24843) (Fission yeast), this protein is ARS-binding protein 2 (abp2).